Here is a 334-residue protein sequence, read N- to C-terminus: Glycerol-3-phosphate dehydrogenase [NAD(P)+] (334 aa).

3 residues coordinate NADPH: tryptophan 13, arginine 33, and lysine 106. Residues lysine 106, glycine 137, and serine 139 each contribute to the sn-glycerol 3-phosphate site. Alanine 141 is an NADPH binding site. Positions 192, 245, 255, 256, and 257 each coordinate sn-glycerol 3-phosphate. Lysine 192 functions as the Proton acceptor in the catalytic mechanism. Arginine 256 contributes to the NADPH binding site. The NADPH site is built by valine 280 and glutamate 282.

Belongs to the NAD-dependent glycerol-3-phosphate dehydrogenase family.

The protein resides in the cytoplasm. It catalyses the reaction sn-glycerol 3-phosphate + NAD(+) = dihydroxyacetone phosphate + NADH + H(+). The catalysed reaction is sn-glycerol 3-phosphate + NADP(+) = dihydroxyacetone phosphate + NADPH + H(+). It participates in membrane lipid metabolism; glycerophospholipid metabolism. In terms of biological role, catalyzes the reduction of the glycolytic intermediate dihydroxyacetone phosphate (DHAP) to sn-glycerol 3-phosphate (G3P), the key precursor for phospholipid synthesis. The polypeptide is Glycerol-3-phosphate dehydrogenase [NAD(P)+] (Chlamydia trachomatis serovar L2b (strain UCH-1/proctitis)).